A 333-amino-acid chain; its full sequence is Adenosine deaminase (333 aa).

Residues H12 and H14 each contribute to the Zn(2+) site. Positions 14, 16, and 170 each coordinate substrate. Position 197 (H197) interacts with Zn(2+). Catalysis depends on E200, which acts as the Proton donor. D278 serves as a coordination point for Zn(2+). D279 provides a ligand contact to substrate.

It belongs to the metallo-dependent hydrolases superfamily. Adenosine and AMP deaminases family. Adenosine deaminase subfamily. Zn(2+) serves as cofactor.

It carries out the reaction adenosine + H2O + H(+) = inosine + NH4(+). It catalyses the reaction 2'-deoxyadenosine + H2O + H(+) = 2'-deoxyinosine + NH4(+). In terms of biological role, catalyzes the hydrolytic deamination of adenosine and 2-deoxyadenosine. The polypeptide is Adenosine deaminase (Escherichia coli O45:K1 (strain S88 / ExPEC)).